We begin with the raw amino-acid sequence, 421 residues long: Zinc finger protein Pegasus (421 aa).

Residues 35–55 (GDKEAETLQGAGTEGDQNGLD) form a disordered region. 3 consecutive C2H2-type zinc fingers follow at residues 82 to 104 (LKCRYCNYASKGTARLIEHIRIH), 110 to 132 (HRCHLCPFASAYERHLEAHMRSH), and 138 to 161 (YKCELCSFRCSDRSNLSHHRRRKH). The segment covering 229–238 (SMTKSSQTSG) has biased composition (polar residues). Disordered regions lie at residues 229-249 (SMTKSSQTSGLPRDPQDLMVD) and 292-358 (QPAT…PTLP). The segment covering 292 to 313 (QPATPAVVSSVSASIAQSSSPT) has biased composition (low complexity). Residues 339–351 (HTSTPSISNSQPS) are compositionally biased toward polar residues. C2H2-type zinc fingers lie at residues 366 to 388 (HHCQHCDMYFADNILYTIHMGCH) and 394 to 418 (FQCNICGCKCKNKYDFACHFARGQH).

This sequence belongs to the Ikaros C2H2-type zinc-finger protein family. Probably self-associates.

The protein resides in the nucleus. Its function is as follows. Transcriptional repressor that binds the core 5'GNNTGTNG-3' DNA consensus sequence. In Gallus gallus (Chicken), this protein is Zinc finger protein Pegasus (IKZF5).